Consider the following 236-residue polypeptide: Endonuclease NucS (236 aa).

Belongs to the NucS endonuclease family.

It localises to the cytoplasm. Its function is as follows. Cleaves both 3' and 5' ssDNA extremities of branched DNA structures. In Saccharolobus solfataricus (strain ATCC 35092 / DSM 1617 / JCM 11322 / P2) (Sulfolobus solfataricus), this protein is Endonuclease NucS.